The primary structure comprises 603 residues: Elongation factor 4 (603 aa).

The region spanning 9 to 191 (SNIRNFSIIA…RIVRQIPPPK (183 aa)) is the tr-type G domain. GTP is bound by residues 21-26 (DHGKST) and 138-141 (NKID).

This sequence belongs to the TRAFAC class translation factor GTPase superfamily. Classic translation factor GTPase family. LepA subfamily.

Its subcellular location is the cell inner membrane. The enzyme catalyses GTP + H2O = GDP + phosphate + H(+). Functionally, required for accurate and efficient protein synthesis under certain stress conditions. May act as a fidelity factor of the translation reaction, by catalyzing a one-codon backward translocation of tRNAs on improperly translocated ribosomes. Back-translocation proceeds from a post-translocation (POST) complex to a pre-translocation (PRE) complex, thus giving elongation factor G a second chance to translocate the tRNAs correctly. Binds to ribosomes in a GTP-dependent manner. This chain is Elongation factor 4, found in Idiomarina loihiensis (strain ATCC BAA-735 / DSM 15497 / L2-TR).